Reading from the N-terminus, the 214-residue chain is Cytochrome b (214 aa).

Transmembrane regions (helical) follow at residues 31-51, 75-96, 111-131, and 176-196; these read FGSM…FLAI, WIMQ…YIHI, WLSG…GYVL, and FFAL…IHII. H81 and H95 together coordinate heme b. Residues H180 and H194 each contribute to the heme b site. H199 is a binding site for a ubiquinone.

Belongs to the cytochrome b family. In terms of assembly, the cytochrome bc1 complex contains 3 respiratory subunits (MT-CYB, CYC1 and UQCRFS1), 2 core proteins (UQCRC1 and UQCRC2) and probably 6 low-molecular weight proteins. It depends on heme b as a cofactor.

Its subcellular location is the mitochondrion inner membrane. Functionally, component of the ubiquinol-cytochrome c reductase complex (complex III or cytochrome b-c1 complex) that is part of the mitochondrial respiratory chain. The b-c1 complex mediates electron transfer from ubiquinol to cytochrome c. Contributes to the generation of a proton gradient across the mitochondrial membrane that is then used for ATP synthesis. The sequence is that of Cytochrome b (MT-CYB) from Atractaspis micropholis (Mole viper).